Reading from the N-terminus, the 14507-residue chain is Mucin-16 (14507 aa).

Positions 1 to 17 (MLKPSGLPGSSSPTRSL) are enriched in low complexity. A disordered region spans residues 1–138 (MLKPSGLPGS…PRTRTSSTEG (138 aa)). Residues 1-14451 (MLKPSGLPGS…EPLTGNSDLP (14451 aa)) are Extracellular-facing. Polar residues-rich tracts occupy residues 35–46 (TGATLSPKTSTG) and 56–138 (PFTS…STEG). Residue Asn139 is glycosylated (N-linked (GlcNAc...) asparagine). Disordered regions lie at residues 160–180 (EKYT…ETPW), 198–229 (DSTA…TNPS), 265–287 (FSSP…LSSS), 396–554 (LGGT…STSV), 655–674 (VSKT…SYTM), 695–719 (SLGL…GHTK), and 740–888 (TSTF…RTTL). The segment covering 166 to 178 (TETSTTEGDSTET) has biased composition (low complexity). A compositionally biased stretch (polar residues) spans 212–229 (PAETTVTDSHTPGRTNPS). 2 stretches are compositionally biased toward low complexity: residues 276-287 (SRISTSAPLSSS) and 396-413 (LGGT…STTL). Polar residues-rich tracts occupy residues 414 to 423 (VSEETNTHHS), 431 to 441 (GTLNTSMTPLE), and 460 to 478 (GFTT…SSSH). Residue Asn434 is glycosylated (N-linked (GlcNAc...) asparagine). 2 stretches are compositionally biased toward low complexity: residues 485 to 497 (TTGS…SSST) and 508 to 525 (ATTS…ESTA). Residues 526-543 (QQFSEPQHTQWVETSPSM) are compositionally biased toward polar residues. Polar residues-rich tracts occupy residues 696–706 (LGLTPLNTRHP), 740–780 (TSTF…NAAT), 787–796 (NATSPLTHPS), and 805–821 (SVLT…SPNI). The N-linked (GlcNAc...) asparagine glycan is linked to Asn787. Positions 823–846 (PTGTLTSESSESPSTLSLPSVSGV) are enriched in low complexity. Polar residues-rich tracts occupy residues 847-860 (KTTF…THLF) and 869-888 (TSNP…RTTL). Asn930 and Asn957 each carry an N-linked (GlcNAc...) asparagine glycan. Composition is skewed to polar residues over residues 949–969 (SQTN…TWPE), 1092–1101 (GSSTPGRTSQ), 1124–1137 (GTSS…TATH), and 1301–1317 (SGSS…NTGS). Disordered regions lie at residues 949–981 (SQTN…LPSA), 1082–1101 (VSPS…RTSQ), 1121–1149 (PRDG…ARST), 1301–1378 (SGSS…NLTS), 1593–1641 (LGTQ…SSSS), and 1704–1757 (LSES…SPTT). Residues 1318–1328 (TWDPTTYITTT) show a composition bias toward low complexity. 5 stretches are compositionally biased toward polar residues: residues 1334 to 1347 (SSAQ…VRTL), 1368 to 1378 (PKISSSPNLTS), 1596 to 1613 (QGRS…STDT), 1621 to 1633 (GPTN…PMDN), and 1704 to 1745 (LSES…GSQM). N-linked (GlcNAc...) asparagine glycosylation occurs at Asn1375. A glycan (N-linked (GlcNAc...) asparagine) is linked at Asn1633. Low complexity predominate over residues 1746-1757 (STSIPLTSSPTT). Residues Asn1840, Asn1877, and Asn1890 are each glycosylated (N-linked (GlcNAc...) asparagine). Over residues 1846–1908 (DLSHGVHTSS…TEKSEVSSSI (63 aa)) the composition is skewed to polar residues. 4 disordered regions span residues 1846–1930 (DLSH…PGNR), 2010–2033 (VSAS…YSSA), 2064–2140 (WPST…GASI), and 2153–2177 (RSDV…SAGT). Low complexity-rich tracts occupy residues 2019–2033 (SVSS…YSSA) and 2064–2085 (WPST…NPSS). The segment covering 2111 to 2132 (HGPQNTAASTLNTDASSVTGLS) has biased composition (polar residues). 2 N-linked (GlcNAc...) asparagine glycosylation sites follow: Asn2345 and Asn2375. Disordered regions lie at residues 2393–2455 (PTSI…PFTI) and 2566–2591 (SESK…ETSA). Composition is skewed to low complexity over residues 2417-2429 (TSTT…TSPS) and 2566-2583 (SESK…TPTS). Asn2737 carries an N-linked (GlcNAc...) asparagine glycan. 10 disordered regions span residues 2789–2822 (TTGS…LTMN), 2838–2885 (TATQ…TWGI), 2901–3006 (DTKS…AMTS), 3019–3052 (TGQA…TSRK), 3083–3148 (TLNM…ASSI), 3172–3235 (SQAA…PETT), 3251–3276 (ALGS…PTEN), 3299–3392 (GTPG…KTET), 3415–3436 (TSRS…TSGS), and 3462–3491 (VSLP…VTSP). Residues 2803–2819 (SGSTHSTGTKTFSSLPL) are compositionally biased toward polar residues. A compositionally biased stretch (low complexity) spans 2864–2875 (SASSSPSKAFAS). Polar residues-rich tracts occupy residues 2876 to 2885 (LTTAPPTWGI) and 2901 to 2918 (DTKS…NTIP). Residues 2919 to 2931 (DSDASTASSSLSK) show a composition bias toward low complexity. The segment covering 2942-2968 (MTSTKAISASSFQSTGFTETPEGSASP) has biased composition (polar residues). Low complexity predominate over residues 3019-3035 (TGQAARSGSSSSPISLS). Positions 3041-3052 (SFLSPTASTSRK) are enriched in polar residues. N-linked (GlcNAc...) asparagine glycosylation is present at Asn3085. The segment covering 3107–3116 (TAETQTLTFT) has biased composition (low complexity). Composition is skewed to polar residues over residues 3117–3132 (PSET…SPTE) and 3172–3181 (SQAAQGNSTW). Asn3178 carries an N-linked (GlcNAc...) asparagine glycan. Low complexity predominate over residues 3188-3200 (TGSSPAGTSPGSP). 2 stretches are compositionally biased toward polar residues: residues 3201–3214 (EMST…SKEP) and 3251–3261 (ALGSGSTSISH). Low complexity predominate over residues 3263–3274 (PTGTTSPTKSPT). 2 stretches are compositionally biased toward polar residues: residues 3299–3342 (GTPG…TTGM) and 3360–3383 (VSLS…SSLT). Low complexity-rich tracts occupy residues 3424–3436 (SSTS…TSGS) and 3477–3491 (PSGG…VTSP). Asn3501 carries N-linked (GlcNAc...) asparagine glycosylation. Over residues 3538–3555 (ISTTITTMGTNSISTTTP) the composition is skewed to low complexity. Disordered stretches follow at residues 3538 to 3588 (ISTT…STAA), 3644 to 3672 (TPSS…TAST), 3794 to 3829 (RSSG…GQVP), 3843 to 3879 (AKTP…TPSA), 3914 to 3982 (LESG…SPVV), 4024 to 4056 (MDTS…SSKR), 4094 to 4121 (AMQT…WTGT), and 4138 to 4166 (FSKG…VPIH). Polar residues-rich tracts occupy residues 3812 to 3824 (QTST…TSAH) and 3848 to 3868 (ATFQ…TSDS). Positions 3916–3927 (SGTTSSPSWKSS) are enriched in low complexity. Residues 3946–3982 (PSTNTVETTGWVTSSEHASHSTIPAHSASSKLTSPVV) are compositionally biased toward polar residues. A compositionally biased stretch (low complexity) spans 4026–4041 (TSSTTQTSIISSPGST). The segment covering 4095-4121 (MQTSPPGATSLSAPTLDTSATASWTGT) has biased composition (polar residues). The segment covering 4152–4164 (SVEETSSSSSLVP) has biased composition (low complexity). Asn4220, Asn4498, Asn4606, Asn4613, and Asn4624 each carry an N-linked (GlcNAc...) asparagine glycan. Disordered stretches follow at residues 4728–4748 (VKDV…PSSQ), 4845–4961 (HSTV…TRLS), and 5026–5066 (VSWT…KLSS). Residues 4856–4876 (KVTSPNVTTSTMEDTTISRSI) show a composition bias toward polar residues. N-linked (GlcNAc...) asparagine glycosylation is present at Asn4861. 2 stretches are compositionally biased toward low complexity: residues 4877 to 4914 (PKSS…ETST) and 4924 to 4939 (TTEV…SSTS). Composition is skewed to polar residues over residues 4944–4961 (DQST…TRLS) and 5026–5037 (VSWTSPPSVDKT). Residues 5038-5047 (SSPSSFLSSP) are compositionally biased toward low complexity. The segment covering 5048 to 5059 (AMTTPSLISSTL) has biased composition (polar residues). 3 N-linked (GlcNAc...) asparagine glycosylation sites follow: Asn5096, Asn5131, and Asn5228. Disordered stretches follow at residues 5128–5149 (VKAN…ETPK), 5221–5249 (EVSS…DTFT), and 5271–5303 (TQAS…TVTQ). A compositionally biased stretch (polar residues) spans 5221 to 5234 (EVSSTGVNSSSKIS). Low complexity predominate over residues 5280–5293 (SHSTLPLDTSTTLS). Residues 5294-5303 (QGGTHSTVTQ) show a composition bias toward polar residues. Asn5320 carries N-linked (GlcNAc...) asparagine glycosylation. Disordered stretches follow at residues 5328–5365 (PVEE…PLPV), 5381–5400 (GTTS…SITH), 5426–5507 (NVGT…TNTA), 5519–5538 (ASRT…DRPT), 5624–5654 (PVEE…ESIP), 5675–5696 (LGTT…PTQE), and 5727–5747 (ISGH…KATS). Low complexity-rich tracts occupy residues 5333–5365 (SSVS…PLPV) and 5381–5393 (GTTS…SSPP). An N-linked (GlcNAc...) asparagine glycan is attached at Asn5394. Polar residues-rich tracts occupy residues 5426 to 5441 (NVGT…SSVL) and 5447 to 5485 (SKAT…TASL). An N-linked (GlcNAc...) asparagine glycan is attached at Asn5470. 4 stretches are compositionally biased toward low complexity: residues 5495–5504 (SEKTSSTTET), 5520–5532 (SRTE…TSIS), 5633–5654 (SLMS…ESIP), and 5675–5688 (LGTT…SSPP). Asn5689 carries an N-linked (GlcNAc...) asparagine glycan. Polar residues predominate over residues 5727 to 5737 (ISGHESQSSVP). Residue Asn5863 is glycosylated (N-linked (GlcNAc...) asparagine). Disordered stretches follow at residues 5882–5931 (STAS…SSPV) and 6054–6078 (STST…TPEL). Residues 5903 to 5916 (TTTMSRSTKGVSWQ) show a composition bias toward polar residues. Residues 5917-5928 (SPPSVEETSSPS) show a composition bias toward low complexity. The segment covering 6054-6063 (STSTPGSPET) has biased composition (polar residues). N-linked (GlcNAc...) asparagine glycosylation is present at Asn6088. Disordered stretches follow at residues 6122 to 6149 (PASA…PLTI), 6219 to 6251 (NSLS…LVSV), 6399 to 6425 (SRTE…DTST), 6438 to 6459 (TKSE…SQGT), 6497 to 6545 (ISGT…TSLP), and 6682 to 6714 (TTGA…PDIS). Composition is skewed to low complexity over residues 6134 to 6149 (SPEA…PLTI), 6226 to 6251 (PLLV…LVSV), and 6399 to 6410 (SRTELTSSSRTS). 2 stretches are compositionally biased toward polar residues: residues 6411-6425 (IQGT…DTST) and 6445-6459 (IATQ…SQGT). Positions 6500-6523 (TSPPSVEKTSSSSSLLSLPAITSP) are enriched in low complexity. Polar residues-rich tracts occupy residues 6530–6545 (LPES…TSLP) and 6683–6699 (TGAT…SRRT). N-linked (GlcNAc...) asparagine glycosylation occurs at Asn6732. 3 disordered regions span residues 6800-6822 (SFSS…TLPK), 6845-6865 (TLGT…STSH), and 6886-6939 (TAAT…SETT). Residues 6848–6864 (TSPEPTTSSPPNLSSTS) are compositionally biased toward low complexity. Asn6859 is a glycosylation site (N-linked (GlcNAc...) asparagine). The span at 6886–6905 (TAATNVETTSSGHGSQSSVL) shows a compositional bias: polar residues. Over residues 6919-6938 (TTSTMGHTTVSTSMSVSSET) the composition is skewed to low complexity. Asn6961 carries an N-linked (GlcNAc...) asparagine glycan. Disordered regions lie at residues 6981-7004 (AEVS…QSTV), 7028-7107 (MTIP…ATTS), 7143-7208 (TSPE…TSKA), 7279-7302 (SRTE…MLPE), 7320-7345 (ESSE…TLDT), 7360-7427 (QRLP…SLLT), 7437-7456 (LDAS…STSV), 7463-7503 (EVTT…ETTK), 7527-7553 (SNTR…SEET), 7577-7597 (TEAI…TMSQ), 7726-7782 (ATTT…TTSS), 7825-7849 (LASS…TKMS), 7908-7927 (HTSP…TSST), and 7970-8000 (PSFS…SPLP). Polar residues predominate over residues 7028–7038 (MTIPTQTGPSG). Low complexity predominate over residues 7039–7055 (STSQDTLTLDTSTTKSQ). The segment covering 7057–7075 (KTHSTLTQRFPHSEMTTLM) has biased composition (polar residues). Over residues 7086-7105 (SSPSLENPSSLPSLLSLPAT) the composition is skewed to low complexity. The segment covering 7166-7200 (GKDTTNTEAVHPSTNTAASNVEIPSSGHESPSSAL) has biased composition (polar residues). The span at 7279-7298 (SRTEVTSSSRTSISGSAEST) shows a compositional bias: low complexity. Polar residues-rich tracts occupy residues 7322-7345 (SEMT…TLDT), 7360-7371 (QRLPHSEITTLV), and 7390-7402 (SPPS…SAMI). Composition is skewed to low complexity over residues 7403-7427 (SPSP…SLLT) and 7439-7455 (ASAE…SSTS). The segment covering 7474 to 7484 (FSNTAVTKVGT) has biased composition (polar residues). Over residues 7485–7494 (SSSGHESPSS) the composition is skewed to low complexity. Over residues 7733–7749 (GTSTEPGTSSSSSLSTT) the composition is skewed to low complexity. Basic and acidic residues predominate over residues 7750 to 7765 (SHERLTTYKDTAHTEA). The span at 7768–7782 (PSTNTGGTNVATTSS) shows a compositional bias: polar residues. Low complexity-rich tracts occupy residues 7835–7846 (ESSGSEGTSSGT), 7915–7927 (TTQG…TSST), and 7973–8000 (SLMS…SPLP). 2 N-linked (GlcNAc...) asparagine glycosylation sites follow: Asn8029 and Asn8055. Disordered regions lie at residues 8042 to 8078 (EVTT…LADS), 8111 to 8134 (IQTE…GTSL), 8312 to 8331 (GISR…TSHE), 8342 to 8389 (TEDM…YTMG), 8411 to 8472 (TSSL…ISPD), 8604 to 8624 (MLRT…STSA), 8674 to 8741 (SPMA…TKVS), and 8775 to 8880 (TPLT…HSSP). The span at 8052 to 8078 (PSSNRTVTDVGTSSSGHESTSFVLADS) shows a compositional bias: polar residues. Residues 8319-8328 (TSSTSNLSST) show a composition bias toward low complexity. N-linked (GlcNAc...) asparagine glycosylation is present at Asn8324. Over residues 8345–8389 (MQPSTHTAVTNVRTSISGHESQSSVLSDSETPKATSPMGTTYTMG) the composition is skewed to polar residues. Positions 8607 to 8624 (TSSEPETSSPPNLSSTSA) are enriched in low complexity. 2 N-linked (GlcNAc...) asparagine glycosylation sites follow: Asn8618 and Asn8684. Composition is skewed to polar residues over residues 8674–8740 (SPMA…TTKV) and 8781–8810 (GSAE…SSRA). The segment covering 8850–8880 (TSPPSSLVSLSAVTSPSPLYSTPSESSHSSP) has biased composition (low complexity). Asn8913 carries an N-linked (GlcNAc...) asparagine glycan. 2 disordered regions span residues 8995–9018 (ESTS…SATK) and 9147–9168 (SLSS…DSIH). Asn9202 carries an N-linked (GlcNAc...) asparagine glycan. Residues 9294-9307 (SISEETSSATEKST) show a composition bias toward low complexity. Positions 9294–9460 (SISEETSSAT…TPSGSSHSSP (167 aa)) are disordered. 2 stretches are compositionally biased toward polar residues: residues 9308–9357 (VLSS…STPL) and 9374–9412 (SGAT…TTPM). Low complexity predominate over residues 9431-9460 (SPPSSLVSSSSVTSPSPLYSTPSGSSHSSP). N-linked (GlcNAc...) asparagine glycosylation is present at Asn9493. 4 disordered regions span residues 9611–9635 (ATPE…AQST), 9726–9753 (SSSS…SPSS), 9771–9791 (VLDT…STSV), and 9869–9890 (TEPT…ETTS). The segment covering 9621-9635 (MPSSRTSIPGPAQST) has biased composition (polar residues). Composition is skewed to low complexity over residues 9774-9790 (TSSE…SSTS) and 9881-9890 (ETSTSEETTS). The N-linked (GlcNAc...) asparagine glycan is linked to Asn9785. Residues Asn10075 and Asn10173 are each glycosylated (N-linked (GlcNAc...) asparagine). Disordered stretches follow at residues 10175 to 10218 (SLDT…PPAS) and 10445 to 10469 (TIRP…TGGT). Positions 10178 to 10193 (TSSVTPTNTPSSPGST) are enriched in low complexity. Polar residues predominate over residues 10194 to 10212 (HLLQSSKTDFTSSAKTSSP). Asn10510 is a glycosylation site (N-linked (GlcNAc...) asparagine). Residues 10544 to 10573 (SLGAETSTALPRTTPSVFNRESETTASLVS) are compositionally biased toward polar residues. Disordered stretches follow at residues 10544 to 10590 (SLGA…DVSS) and 10689 to 10719 (ETSS…PGAE). A glycan (N-linked (GlcNAc...) asparagine) is linked at Asn10700. The segment covering 10708 to 10719 (ATPSIATSPGAE) has biased composition (polar residues). Asn10749 carries an N-linked (GlcNAc...) asparagine glycan. The span at 10849–10860 (TTPSMTTSHGAE) shows a compositional bias: polar residues. Disordered stretches follow at residues 10849–10872 (TTPS…TVST), 10898–10926 (LSPG…TPTV), and 11003–11036 (LPTL…TVSP). Positions 10861-10872 (SSSAVPTPTVST) are enriched in low complexity. Over residues 11003–11018 (LPTLTLSPGEPETTPS) the composition is skewed to low complexity. An N-linked (GlcNAc...) asparagine glycan is attached at Asn11053. The disordered stretch occupies residues 11072-11092 (SMATSHGAEASSAVPTPTVSP). N-linked (GlcNAc...) asparagine glycosylation is found at Asn11224 and Asn11263. 2 stretches are compositionally biased toward polar residues: residues 11269–11284 (HPAE…TSRF) and 11358–11381 (STTV…SIAT). 6 disordered regions span residues 11269 to 11301 (HPAE…SPEA), 11358 to 11400 (STTV…SPDV), 11508 to 11537 (KFSH…STTT), 11583 to 11724 (ETST…TSPR), 11836 to 11861 (SPTA…TSTM), and 11913 to 11937 (QTVT…FSRT). N-linked (GlcNAc...) asparagine glycosylation occurs at Asn11367. Polar residues-rich tracts occupy residues 11583 to 11594 (ETSTTVSGTIPN), 11631 to 11651 (VTSQ…TLTP), and 11658 to 11672 (TTAS…QTGF). An N-linked (GlcNAc...) asparagine glycan is attached at Asn11594. The segment covering 11700-11717 (PVSRTTSSFSHSSPDATP) has biased composition (low complexity). Composition is skewed to polar residues over residues 11849–11861 (PLST…TSTM) and 11913–11928 (QTVT…SVTS). 12 repeat units span residues 12067–12223 (AATV…PSPT), 12224–12381 (TAGP…PTIM), 12382–12537 (AAGP…PSPA), 12538–12692 (TAGP…PSPT), 12693–12848 (TAGP…PSPT), 12849–13004 (SAGP…PSPT), 13005–13160 (TAVP…PSPT), 13161–13316 (TTGP…PGPT), 13317–13472 (ATGP…SGPM), 13473–13628 (TASP…PGPS), 13629–13784 (AASP…FGPS), and 13785–13939 (AASH…RYMA). The 12 X approximate tandem repeats stretch occupies residues 12067 to 13939 (AATVPFMVPF…FTINNLRYMA (1873 aa)). Positions 12072–12193 (FMVPFTLNFT…NSLYVNGFTH (122 aa)) constitute an SEA 1 domain. N-linked (GlcNAc...) asparagine glycans are attached at residues Asn12079, Asn12100, and Asn12116. Residues Cys12126 and Cys12146 are joined by a disulfide bond. The N-linked (GlcNAc...) asparagine glycan is linked to Asn12168. Positions 12196–12226 (SMPTTSTPGTSTVDVGTSGTPSSSPSPTTAG) are disordered. One can recognise an SEA 2 domain in the interval 12228 to 12349 (LLMPFTLNFT…NSLYVNGFTH (122 aa)). N-linked (GlcNAc...) asparagine glycans are attached at residues Asn12235 and Asn12272. Cys12282 and Cys12302 are disulfide-bonded. Residues 12353–12376 (VSTTSTPGTSTVDLRTSGTPSSLS) are disordered. SEA domains lie at 12386-12507 (LLVP…GFTH), 12542-12663 (LLVL…GFTH), and 12697-12818 (LLVP…GFTH). N-linked (GlcNAc...) asparagine glycosylation is found at Asn12393, Asn12414, and Asn12430. A disulfide bridge connects residues Cys12440 and Cys12460. 3 N-linked (GlcNAc...) asparagine glycosylation sites follow: Asn12549, Asn12570, and Asn12586. A disulfide bond links Cys12596 and Cys12616. 3 N-linked (GlcNAc...) asparagine glycosylation sites follow: Asn12704, Asn12725, and Asn12741. Residues Cys12751 and Cys12771 are joined by a disulfide bond. Positions 12819 to 12834 (QTSAPNTSTPGTSTVD) are enriched in polar residues. The tract at residues 12819–12849 (QTSAPNTSTPGTSTVDLGTSGTPSSLPSPTS) is disordered. The N-linked (GlcNAc...) asparagine glycan is linked to Asn12824. Low complexity predominate over residues 12835–12849 (LGTSGTPSSLPSPTS). The SEA 6 domain occupies 12853–12974 (LLVPFTLNFT…NSLYVNGFTH (122 aa)). N-linked (GlcNAc...) asparagine glycans are attached at residues Asn12860, Asn12881, and Asn12897. Cys12907 and Cys12927 are oxidised to a cystine. The span at 12978–12990 (VAPTSTPGTSTVD) shows a compositional bias: polar residues. Residues 12978–13003 (VAPTSTPGTSTVDLGTSGTPSSLPSP) are disordered. Positions 12991-13003 (LGTSGTPSSLPSP) are enriched in low complexity. SEA domains lie at 13009–13130 (LLVP…GFTH) and 13165–13286 (LLVP…GFTQ). 3 N-linked (GlcNAc...) asparagine glycosylation sites follow: Asn13016, Asn13037, and Asn13053. A disulfide bridge links Cys13063 with Cys13083. 2 N-linked (GlcNAc...) asparagine glycosylation sites follow: Asn13172 and Asn13193. The cysteines at positions 13219 and 13239 are disulfide-linked. Polar residues predominate over residues 13291–13313 (PTTSTPGTFTVQPETSETPSSLP). The disordered stretch occupies residues 13291-13317 (PTTSTPGTFTVQPETSETPSSLPGPTA). 2 SEA domains span residues 13321–13442 (VLLP…GFTH) and 13477–13598 (LLVL…GFTQ). N-linked (GlcNAc...) asparagine glycans are attached at residues Asn13328, Asn13349, and Asn13365. Cys13375 and Cys13395 are joined by a disulfide. Residues Asn13484, Asn13505, and Asn13521 are each glycosylated (N-linked (GlcNAc...) asparagine). A disulfide bridge connects residues Cys13531 and Cys13551. The span at 13603–13621 (PTTSIPGTPTVDLGTSGTP) shows a compositional bias: polar residues. A disordered region spans residues 13603 to 13625 (PTTSIPGTPTVDLGTSGTPVSKP). SEA domains follow at residues 13633–13754 (LLVL…GFTH), 13789–13909 (LLIL…GFTH), 13922–14043 (SEEP…GYNE), and 14073–14193 (HLKT…GYAP). 2 N-linked (GlcNAc...) asparagine glycosylation sites follow: Asn13640 and Asn13661. A disulfide bridge connects residues Cys13687 and Cys13707. N-linked (GlcNAc...) asparagine glycosylation is found at Asn13733, Asn13744, Asn13796, Asn13816, Asn13832, Asn13929, and Asn13950. A disulfide bond links Cys13976 and Cys13996. 2 N-linked (GlcNAc...) asparagine glycosylation sites follow: Asn14080 and Asn14100. Cys14126 and Cys14146 are disulfide-bonded. N-linked (GlcNAc...) asparagine glycosylation is found at Asn14195, Asn14212, Asn14254, Asn14287, Asn14326, and Asn14363. SEA domains are found at residues 14198-14309 (IRGE…EMES) and 14319-14438 (STQH…GYSP). Cysteines 14373 and 14393 form a disulfide. N-linked (GlcNAc...) asparagine glycans are attached at residues Asn14417 and Asn14423. A helical transmembrane segment spans residues 14452–14472 (FWAVILIGLAGLLGVITCLIC). At 14473 to 14507 (GVLVTTRRRKKEGEYNVQQQCPGYYQSHLDLEDLQ) the chain is on the cytoplasmic side.

As to quaternary structure, binds to MSLN. Binding to MSLN mediates heterotypic cell adhesion. This may contribute to the metastasis of ovarian cancer to the peritoneum by initiating cell attachment to the mesothelial epithelium via binding to MSLN. Heavily O-glycosylated; expresses both type 1 and type 2 core glycans. In terms of processing, heavily N-glycosylated; expresses primarily high mannose and complex bisecting type N-linked glycans. Post-translationally, may be phosphorylated. Phosphorylation of the intracellular C-terminal domain may induce proteolytic cleavage and the liberation of the extracellular domain into the extracellular space. May contain numerous disulfide bridges. Association of several molecules of the secreted form may occur through interchain disulfide bridges providing an extraordinarily large gel-like matrix in the extracellular space or in the lumen of secretory ducts. Expressed in corneal and conjunctival epithelia (at protein level). Overexpressed in ovarian carcinomas and ovarian low malignant potential (LMP) tumors as compared to the expression in normal ovarian tissue and ovarian adenomas.

The protein resides in the cell membrane. It is found in the secreted. The protein localises to the extracellular space. Functionally, thought to provide a protective, lubricating barrier against particles and infectious agents at mucosal surfaces. The protein is Mucin-16 of Homo sapiens (Human).